The following is a 282-amino-acid chain: 4-hydroxy-tetrahydrodipicolinate reductase (282 aa).

NAD(+)-binding positions include 14 to 19 (GAMGRM) and 115 to 117 (GTT). His171 serves as the catalytic Proton donor/acceptor. His172 is a binding site for (S)-2,3,4,5-tetrahydrodipicolinate. Lys175 acts as the Proton donor in catalysis. A (S)-2,3,4,5-tetrahydrodipicolinate-binding site is contributed by 181–182 (GT).

Belongs to the DapB family.

The protein resides in the cytoplasm. It carries out the reaction (S)-2,3,4,5-tetrahydrodipicolinate + NAD(+) + H2O = (2S,4S)-4-hydroxy-2,3,4,5-tetrahydrodipicolinate + NADH + H(+). The catalysed reaction is (S)-2,3,4,5-tetrahydrodipicolinate + NADP(+) + H2O = (2S,4S)-4-hydroxy-2,3,4,5-tetrahydrodipicolinate + NADPH + H(+). The protein operates within amino-acid biosynthesis; L-lysine biosynthesis via DAP pathway; (S)-tetrahydrodipicolinate from L-aspartate: step 4/4. Functionally, catalyzes the conversion of 4-hydroxy-tetrahydrodipicolinate (HTPA) to tetrahydrodipicolinate. The protein is 4-hydroxy-tetrahydrodipicolinate reductase of Prochlorococcus marinus (strain NATL2A).